The chain runs to 400 residues: NADH-quinone oxidoreductase subunit D (400 aa).

The protein belongs to the complex I 49 kDa subunit family. As to quaternary structure, NDH-1 is composed of 14 different subunits. Subunits NuoB, C, D, E, F, and G constitute the peripheral sector of the complex.

It is found in the cell inner membrane. It catalyses the reaction a quinone + NADH + 5 H(+)(in) = a quinol + NAD(+) + 4 H(+)(out). NDH-1 shuttles electrons from NADH, via FMN and iron-sulfur (Fe-S) centers, to quinones in the respiratory chain. The immediate electron acceptor for the enzyme in this species is believed to be a menaquinone. Couples the redox reaction to proton translocation (for every two electrons transferred, four hydrogen ions are translocated across the cytoplasmic membrane), and thus conserves the redox energy in a proton gradient. This is NADH-quinone oxidoreductase subunit D from Chlorobaculum parvum (strain DSM 263 / NCIMB 8327) (Chlorobium vibrioforme subsp. thiosulfatophilum).